Here is a 519-residue protein sequence, read N- to C-terminus: Probable DNA ligase (519 aa).

E211 contributes to the ATP binding site. Catalysis depends on K213, which acts as the N6-AMP-lysine intermediate. R218, R233, E262, F302, R374, and K380 together coordinate ATP.

Belongs to the ATP-dependent DNA ligase family. Mg(2+) is required as a cofactor.

It catalyses the reaction ATP + (deoxyribonucleotide)n-3'-hydroxyl + 5'-phospho-(deoxyribonucleotide)m = (deoxyribonucleotide)n+m + AMP + diphosphate.. In terms of biological role, DNA ligase that seals nicks in double-stranded DNA during DNA replication, DNA recombination and DNA repair. The chain is Probable DNA ligase from Anaeromyxobacter sp. (strain Fw109-5).